Consider the following 373-residue polypeptide: Phosphoserine aminotransferase (373 aa).

Arg-46 lines the L-glutamate pocket. 4 residues coordinate pyridoxal 5'-phosphate: Phe-104, Thr-150, Asp-172, and Gln-195. Residue Lys-196 is modified to N6-(pyridoxal phosphate)lysine. Position 247–248 (247–248 (NT)) interacts with pyridoxal 5'-phosphate.

Belongs to the class-V pyridoxal-phosphate-dependent aminotransferase family. SerC subfamily. As to quaternary structure, homodimer. Pyridoxal 5'-phosphate serves as cofactor.

It is found in the cytoplasm. It carries out the reaction O-phospho-L-serine + 2-oxoglutarate = 3-phosphooxypyruvate + L-glutamate. The catalysed reaction is 4-(phosphooxy)-L-threonine + 2-oxoglutarate = (R)-3-hydroxy-2-oxo-4-phosphooxybutanoate + L-glutamate. It participates in amino-acid biosynthesis; L-serine biosynthesis; L-serine from 3-phospho-D-glycerate: step 2/3. The protein operates within cofactor biosynthesis; pyridoxine 5'-phosphate biosynthesis; pyridoxine 5'-phosphate from D-erythrose 4-phosphate: step 3/5. Its function is as follows. Catalyzes the reversible conversion of 3-phosphohydroxypyruvate to phosphoserine and of 3-hydroxy-2-oxo-4-phosphonooxybutanoate to phosphohydroxythreonine. This chain is Phosphoserine aminotransferase, found in Rhodococcus jostii (strain RHA1).